Reading from the N-terminus, the 311-residue chain is Catechol 1,2-dioxygenase 1 (311 aa).

The Fe cation site is built by tyrosine 164, tyrosine 200, histidine 224, and histidine 226.

This sequence belongs to the intradiol ring-cleavage dioxygenase family. As to quaternary structure, homodimer. Fe(3+) is required as a cofactor.

The enzyme catalyses catechol + O2 = cis,cis-muconate + 2 H(+). It participates in aromatic compound metabolism; beta-ketoadipate pathway; 5-oxo-4,5-dihydro-2-furylacetate from catechol: step 1/3. Its function is as follows. Can cleave 4-methyl-, 4-chloro-, and 3-methoxycatechol at lower rates than catechol, but has no activity with 4-nitrocatechol or protocatechuic acid. The protein is Catechol 1,2-dioxygenase 1 (catA1) of Acinetobacter lwoffii.